Here is a 64-residue protein sequence, read N- to C-terminus: Micrurotoxin 2 (64 aa).

Disulfide bonds link C3–C24, C6–C11, C17–C41, C45–C57, and C58–C63.

Belongs to the three-finger toxin family. Ancestral subfamily. Expressed by the venom gland.

Its subcellular location is the secreted. In terms of biological role, allosteric modulator of the GABA(A) receptor (GABR), possibly increasing receptor affinity for the agonist, thus enhancing receptor opening and macroscopic desensitization. In vivo, intracerebroventricular injection into mice results in periods of reduced basal activity, followed by bursts of intense seizures and death. The polypeptide is Micrurotoxin 2 (Micrurus mipartitus (Red-tailed coral snake)).